A 293-amino-acid chain; its full sequence is Protease HtpX (293 aa).

2 helical membrane-spanning segments follow: residues 4–24 (IALF…VLSL) and 34–54 (GLMI…LLMS). H139 provides a ligand contact to Zn(2+). Residue E140 is part of the active site. H143 provides a ligand contact to Zn(2+). The next 2 membrane-spanning stretches (helical) occupy residues 158–178 (VVNT…AGFM) and 193–213 (LIYF…ASII). A Zn(2+)-binding site is contributed by E222.

This sequence belongs to the peptidase M48B family. The cofactor is Zn(2+).

Its subcellular location is the cell inner membrane. The protein is Protease HtpX of Escherichia coli O127:H6 (strain E2348/69 / EPEC).